The chain runs to 428 residues: GTPase Obg (428 aa).

Residues 1 to 158 (MFVDQVKIYV…RYIVLELKVL (158 aa)) form the Obg domain. The interval 118 to 143 (KGGRGGRGNTRFATPANPAPQLSENG) is disordered. The OBG-type G domain occupies 159–329 (ADVGLVGFPS…LLFEIADRLE (171 aa)). Residues 165–172 (GFPSVGKS), 190–194 (FTTLN), 212–215 (DLPG), 282–285 (NKMD), and 310–312 (SAV) contribute to the GTP site. Mg(2+)-binding residues include serine 172 and threonine 192. Residues 350–428 (KLEDEEAPFE…LLEFEFEFID (79 aa)) form the OCT domain.

This sequence belongs to the TRAFAC class OBG-HflX-like GTPase superfamily. OBG GTPase family. Monomer. It depends on Mg(2+) as a cofactor.

It is found in the cytoplasm. An essential GTPase which binds GTP, GDP and possibly (p)ppGpp with moderate affinity, with high nucleotide exchange rates and a fairly low GTP hydrolysis rate. Plays a role in control of the cell cycle, stress response, ribosome biogenesis and in those bacteria that undergo differentiation, in morphogenesis control. The sequence is that of GTPase Obg from Bacillus licheniformis (strain ATCC 14580 / DSM 13 / JCM 2505 / CCUG 7422 / NBRC 12200 / NCIMB 9375 / NCTC 10341 / NRRL NRS-1264 / Gibson 46).